The following is a 95-amino-acid chain: CRISPR-associated endoribonuclease Cas2 3 (95 aa).

Asp-7 provides a ligand contact to Mg(2+).

The protein belongs to the CRISPR-associated endoribonuclease Cas2 protein family. In terms of assembly, homodimer, forms a heterotetramer with a Cas1 homodimer. It depends on Mg(2+) as a cofactor.

CRISPR (clustered regularly interspaced short palindromic repeat), is an adaptive immune system that provides protection against mobile genetic elements (viruses, transposable elements and conjugative plasmids). CRISPR clusters contain sequences complementary to antecedent mobile elements and target invading nucleic acids. CRISPR clusters are transcribed and processed into CRISPR RNA (crRNA). Functions as a ssRNA-specific endoribonuclease. Involved in the integration of spacer DNA into the CRISPR cassette. In Rhodospirillum rubrum (strain ATCC 11170 / ATH 1.1.1 / DSM 467 / LMG 4362 / NCIMB 8255 / S1), this protein is CRISPR-associated endoribonuclease Cas2 3.